A 223-amino-acid polypeptide reads, in one-letter code: Ribonuclease T (223 aa).

One can recognise an Exonuclease domain in the interval 20-194 (VVIDVETAGF…YDTEQTALLF (175 aa)). Mg(2+)-binding residues include Asp-23, Glu-25, His-181, and Asp-186. The active-site Proton donor/acceptor is His-181.

The protein belongs to the RNase T family. In terms of assembly, homodimer. Requires Mg(2+) as cofactor.

Functionally, trims short 3' overhangs of a variety of RNA species, leaving a one or two nucleotide 3' overhang. Responsible for the end-turnover of tRNA: specifically removes the terminal AMP residue from uncharged tRNA (tRNA-C-C-A). Also appears to be involved in tRNA biosynthesis. This Cronobacter sakazakii (strain ATCC BAA-894) (Enterobacter sakazakii) protein is Ribonuclease T.